Here is a 175-residue protein sequence, read N- to C-terminus: Ferritin light chain (175 aa).

An N-acetylserine modification is found at S2. One can recognise a Ferritin-like diiron domain in the interval Q7–G156. Residues E54, E57, E58, E61, and E64 each coordinate Fe cation. Positions E54 to E61 are catalytic site for iron oxidation.

It belongs to the ferritin family. In terms of assembly, oligomer of 24 subunits. There are two types of subunits: L (light) chain and H (heavy) chain. The major chain can be light or heavy, depending on the species and tissue type. The functional molecule forms a roughly spherical shell with a diameter of 12 nm and contains a central cavity into which the insoluble mineral iron core is deposited. Interacts with NCOA4.

The protein resides in the cytoplasmic vesicle. It is found in the autophagosome. It localises to the cytoplasm. Its subcellular location is the autolysosome. Functionally, stores iron in a soluble, non-toxic, readily available form. Important for iron homeostasis. Iron is taken up in the ferrous form and deposited as ferric hydroxides after oxidation. Also plays a role in delivery of iron to cells. Mediates iron uptake in capsule cells of the developing kidney. Delivery to lysosomes by the cargo receptor NCOA4 for autophagic degradation and release or iron. This chain is Ferritin light chain (FTL), found in Pongo abelii (Sumatran orangutan).